The following is a 248-amino-acid chain: Putative mutator protein MutT4 (248 aa).

Residues 1–64 (MSDGEQAKSR…GSTRMRTVHE (64 aa)) are disordered. The span at 9–20 (SRRRRGRRRGRR) shows a compositional bias: basic residues. The segment covering 31 to 44 (AQPAGDATPTPATA) has biased composition (low complexity). A compositionally biased stretch (basic residues) spans 45-57 (KRSRSRSPRRGST). In terms of domain architecture, Nudix hydrolase spans 62-198 (VHETSAGGLV…DERRLAEVAD (137 aa)). 4 residues coordinate Mg(2+): Gly-103, Glu-118, Glu-121, and Glu-122. A Nudix box motif is present at residues 103 to 124 (GHIELGETAEQTAIREVAEETG). The tract at residues 204–248 (LQSDGPAALPPLPPSSPRRRPQTHSRARHADDSAPGQHNGPGPGP) is disordered. A compositionally biased stretch (basic residues) spans 220–230 (PRRRPQTHSRA).

This sequence belongs to the Nudix hydrolase family. Requires Mg(2+) as cofactor. Mn(2+) is required as a cofactor.

Its function is as follows. May be involved in the GO system responsible for removing an oxidatively damaged form of guanine (7,8-dihydro-8-oxoguanine, 8-oxo-dGTP) from DNA and the nucleotide pool. This is Putative mutator protein MutT4 (mutT4) from Mycobacterium tuberculosis (strain CDC 1551 / Oshkosh).